Consider the following 43-residue polypeptide: Protein PsbN (43 aa).

A helical transmembrane segment spans residues 5–27; that stretch reads TIFSIFFSCLLIGLTGYSLYTSF.

Belongs to the PsbN family.

Its subcellular location is the plastid. The protein localises to the chloroplast thylakoid membrane. Functionally, may play a role in photosystem I and II biogenesis. In Mesostigma viride (Green alga), this protein is Protein PsbN.